A 464-amino-acid chain; its full sequence is Argininosuccinate lyase (464 aa).

Belongs to the lyase 1 family. Argininosuccinate lyase subfamily.

Its subcellular location is the cytoplasm. The enzyme catalyses 2-(N(omega)-L-arginino)succinate = fumarate + L-arginine. It functions in the pathway amino-acid biosynthesis; L-arginine biosynthesis; L-arginine from L-ornithine and carbamoyl phosphate: step 3/3. The sequence is that of Argininosuccinate lyase from Pseudomonas savastanoi pv. phaseolicola (strain 1448A / Race 6) (Pseudomonas syringae pv. phaseolicola (strain 1448A / Race 6)).